The sequence spans 146 residues: Ribosome maturation factor RimP (146 aa).

The protein belongs to the RimP family.

It localises to the cytoplasm. Functionally, required for maturation of 30S ribosomal subunits. The chain is Ribosome maturation factor RimP from Helicobacter pylori (strain ATCC 700392 / 26695) (Campylobacter pylori).